Consider the following 149-residue polypeptide: Ribonuclease pancreatic (149 aa).

An N-terminal signal peptide occupies residues 1-25 (MGLEKSLILLPLLVLVLAWVQPSLG). Positions 32 and 35 each coordinate substrate. Catalysis depends on His37, which acts as the Proton acceptor. 4 disulfide bridges follow: Cys51–Cys109, Cys65–Cys120, Cys83–Cys135, and Cys90–Cys97. Residue 66 to 70 (KRVNT) coordinates substrate. N-linked (GlcNAc...) asparagine glycosylation occurs at Asn87. Substrate contacts are provided by Lys91 and Arg110. His144 serves as the catalytic Proton donor.

It belongs to the pancreatic ribonuclease family. Monomer. Interacts with and forms tight 1:1 complexes with RNH1. Dimerization of two such complexes may occur. Interaction with RNH1 inhibits this protein. Pancreas.

It is found in the secreted. The catalysed reaction is an [RNA] containing cytidine + H2O = an [RNA]-3'-cytidine-3'-phosphate + a 5'-hydroxy-ribonucleotide-3'-[RNA].. It carries out the reaction an [RNA] containing uridine + H2O = an [RNA]-3'-uridine-3'-phosphate + a 5'-hydroxy-ribonucleotide-3'-[RNA].. Endonuclease that catalyzes the cleavage of RNA on the 3' side of pyrimidine nucleotides. Acts on single-stranded and double-stranded RNA. The protein is Ribonuclease pancreatic (RNASE1) of Acomys cahirinus (Cairo spiny mouse).